The following is a 557-amino-acid chain: Inositol-3-phosphate synthase 1 (557 aa).

The NAD(+) site is built by Gly-67, Gly-68, Asn-69, Asn-70, Asp-141, Ser-177, Val-178, Gln-188, Arg-191, Thr-228, Ala-229, Asn-230, Thr-231, Gly-278, Ser-279, Asp-303, Ser-306, Asn-337, Asn-338, Asp-339, and Lys-352. The residue at position 279 (Ser-279) is a Phosphoserine. Residue Ser-357 is modified to Phosphoserine. NAD(+) is bound by residues Gly-390, Asp-391, Asp-419, and Ser-420. Position 523 is a phosphoserine (Ser-523). The tract at residues 527-557 (CKKGSAPTAPNGCTGDANGHSQAEAPQMPTT) is disordered.

Belongs to the myo-inositol 1-phosphate synthase family. NAD(+) serves as cofactor. In terms of tissue distribution, expressed in testis (at protein level).

The protein resides in the cytoplasm. It catalyses the reaction D-glucose 6-phosphate = 1D-myo-inositol 3-phosphate. The protein operates within polyol metabolism; myo-inositol biosynthesis; myo-inositol from D-glucose 6-phosphate: step 1/2. Functionally, key enzyme in myo-inositol biosynthesis pathway that catalyzes the conversion of glucose 6-phosphate to 1-myo-inositol 1-phosphate in a NAD-dependent manner. Rate-limiting enzyme in the synthesis of all inositol-containing compounds. The polypeptide is Inositol-3-phosphate synthase 1 (ISYNA1) (Bos taurus (Bovine)).